Consider the following 358-residue polypeptide: Small ribosomal subunit biogenesis GTPase RsgA 2 (358 aa).

The 156-residue stretch at alanine 106–isoleucine 261 folds into the CP-type G domain. GTP-binding positions include serine 151–aspartate 154 and glycine 203–threonine 211. Residues cysteine 284, cysteine 289, histidine 291, and cysteine 297 each contribute to the Zn(2+) site.

Belongs to the TRAFAC class YlqF/YawG GTPase family. RsgA subfamily. As to quaternary structure, monomer. Associates with 30S ribosomal subunit, binds 16S rRNA. It depends on Zn(2+) as a cofactor.

It localises to the cytoplasm. One of several proteins that assist in the late maturation steps of the functional core of the 30S ribosomal subunit. Helps release RbfA from mature subunits. May play a role in the assembly of ribosomal proteins into the subunit. Circularly permuted GTPase that catalyzes slow GTP hydrolysis, GTPase activity is stimulated by the 30S ribosomal subunit. The chain is Small ribosomal subunit biogenesis GTPase RsgA 2 from Vibrio parahaemolyticus serotype O3:K6 (strain RIMD 2210633).